A 338-amino-acid polypeptide reads, in one-letter code: Phenylalanine--tRNA ligase alpha subunit (338 aa).

Glutamate 253 is a Mg(2+) binding site.

The protein belongs to the class-II aminoacyl-tRNA synthetase family. Phe-tRNA synthetase alpha subunit type 1 subfamily. As to quaternary structure, tetramer of two alpha and two beta subunits. Requires Mg(2+) as cofactor.

It is found in the cytoplasm. It catalyses the reaction tRNA(Phe) + L-phenylalanine + ATP = L-phenylalanyl-tRNA(Phe) + AMP + diphosphate + H(+). This Geotalea daltonii (strain DSM 22248 / JCM 15807 / FRC-32) (Geobacter daltonii) protein is Phenylalanine--tRNA ligase alpha subunit.